Here is a 710-residue protein sequence, read N- to C-terminus: Tubulin polyglutamylase TTLL11 (710 aa).

Residues 41–135 (VRVDAGAAGE…QRPVTVDSSK (95 aa)) form a disordered region. Residues 51–60 (PECKAGEEQP) show a composition bias toward basic and acidic residues. Over residues 64–82 (APAPAQPSAAEEGNTQVLQ) the composition is skewed to low complexity. Residues 83-93 (RPPPTLPPSKP) show a composition bias toward pro residues. Over residues 123–135 (NGSQRPVTVDSSK) the composition is skewed to polar residues. Positions 128 to 480 (PVTVDSSKAR…EVKVAVIRDT (353 aa)) constitute a TTL domain. ATP-binding positions include Lys-249, 255–256 (QG), 282–285 (QEYI), and 295–297 (KFD). Position 255 (Gln-255) interacts with a protein. Arg-321 is a binding site for L-glutamate. Residue 343 to 344 (TN) coordinates ATP. L-glutamate-binding residues include Tyr-345, Ser-346, and Lys-365. Residues Asp-428, Glu-441, and Asn-443 each coordinate Mg(2+). A c-MTBD region region spans residues 467-538 (LVDEEVKVAV…SICLKQVFPK (72 aa)). Lys-473 is a binding site for L-glutamate. A disordered region spans residues 665–710 (GVPSGGRPPHRGPPQEPSPSAQPAGDNPPPRTSCANKLSHPRHTLS).

Belongs to the tubulin--tyrosine ligase family. Requires Mg(2+) as cofactor.

It localises to the cytoplasm. It is found in the cytoskeleton. The protein localises to the cilium basal body. It catalyses the reaction L-glutamyl-[protein] + L-glutamate + ATP = gamma-L-glutamyl-L-glutamyl-[protein] + ADP + phosphate + H(+). The enzyme catalyses (L-glutamyl)(n)-gamma-L-glutamyl-L-glutamyl-[protein] + L-glutamate + ATP = (L-glutamyl)(n+1)-gamma-L-glutamyl-L-glutamyl-[protein] + ADP + phosphate + H(+). Functionally, polyglutamylase which modifies tubulin, generating polyglutamate side chains of variable lengths on the gamma-carboxyl group of specific glutamate residues within the C-terminal tail of tubulin. Preferentially mediates ATP-dependent polyglutamate long side-chain elongation over the initiation step of the polyglutamylation reaction. Preferentially modifies the alpha-tubulin tail over a beta-tail. Required for CCSAP localization to both spindle and cilia microtubules. Promotes tubulin polyglutamylation which stimulates spastin/SPAST-mediated microtubule severing, thereby regulating microtubule functions. The sequence is that of Tubulin polyglutamylase TTLL11 from Homo sapiens (Human).